Consider the following 275-residue polypeptide: Putative protein A464R (275 aa).

The RNase III domain maps to 51-175; that stretch reads KEDVEYLIGM…LMGAIYFDLG (125 aa). Residues 201-269 enclose the DRBM domain; sequence NYKDRLLKHT…SKIALHTMGV (69 aa).

Belongs to the ribonuclease III family.

The sequence is that of Putative protein A464R from Chlorella (PBCV-1).